A 564-amino-acid chain; its full sequence is CTP synthase (564 aa).

Residues 1-272 (MARPKNVKHI…DIRVLKKLGL (272 aa)) are amidoligase domain. Serine 18 is a CTP binding site. Residue serine 18 coordinates UTP. 19 to 24 (SLGKGI) contacts ATP. Tyrosine 59 is a binding site for L-glutamine. Residue aspartate 76 coordinates ATP. Mg(2+) contacts are provided by aspartate 76 and glutamate 146. Residues 153–155 (DIE), 193–198 (KTKPTQ), and lysine 229 contribute to the CTP site. UTP contacts are provided by residues 193–198 (KTKPTQ) and lysine 229. Residues 299–543 (TIAICGKYTE…VAAAKEFAHG (245 aa)) form the Glutamine amidotransferase type-1 domain. Glycine 363 provides a ligand contact to L-glutamine. Cysteine 390 serves as the catalytic Nucleophile; for glutamine hydrolysis. L-glutamine is bound by residues 391–394 (LGMQ), glutamate 414, and arginine 471. Active-site residues include histidine 516 and glutamate 518.

Belongs to the CTP synthase family. As to quaternary structure, homotetramer.

It catalyses the reaction UTP + L-glutamine + ATP + H2O = CTP + L-glutamate + ADP + phosphate + 2 H(+). The enzyme catalyses L-glutamine + H2O = L-glutamate + NH4(+). The catalysed reaction is UTP + NH4(+) + ATP = CTP + ADP + phosphate + 2 H(+). Its pathway is pyrimidine metabolism; CTP biosynthesis via de novo pathway; CTP from UDP: step 2/2. Allosterically activated by GTP, when glutamine is the substrate; GTP has no effect on the reaction when ammonia is the substrate. The allosteric effector GTP functions by stabilizing the protein conformation that binds the tetrahedral intermediate(s) formed during glutamine hydrolysis. Inhibited by the product CTP, via allosteric rather than competitive inhibition. Catalyzes the ATP-dependent amination of UTP to CTP with either L-glutamine or ammonia as the source of nitrogen. Regulates intracellular CTP levels through interactions with the four ribonucleotide triphosphates. The protein is CTP synthase of Prosthecochloris aestuarii (strain DSM 271 / SK 413).